The primary structure comprises 229 residues: Protein TraJ (229 aa).

The protein localises to the cytoplasm. Functionally, this protein is essential for positively regulating the expression of transfer genes that are involved in the conjugal transfer of DNA between bacterial cells. This Escherichia coli (strain K12) protein is Protein TraJ (traJ).